A 162-amino-acid polypeptide reads, in one-letter code: Allophycocyanin subunit beta (162 aa).

At Asn72 the chain carries N4-methylasparagine. Cys82 provides a ligand contact to (2R,3E)-phycocyanobilin.

Belongs to the phycobiliprotein family. In terms of assembly, heterohexamer of two alpha chains, one alpha-B chain and three beta chains. Post-translationally, contains one covalently linked phycocyanobilin chromophore. The chromophore is added by phycocyanobilin lyase CpcS 1.

The protein resides in the cellular thylakoid membrane. Its function is as follows. Light-harvesting photosynthetic bile pigment-protein from the phycobiliprotein complex. Allophycocyanin has a maximum absorption at approximately 650 to 653 nanometers. The polypeptide is Allophycocyanin subunit beta (apcB) (Nostoc sp. (strain PCC 7120 / SAG 25.82 / UTEX 2576)).